The following is a 184-amino-acid chain: Photosystem I assembly protein Ycf4 (184 aa).

2 helical membrane-spanning segments follow: residues 21–43 and 58–80; these read NFCW…TSSY and IFFP…SSYL.

It belongs to the Ycf4 family.

Its subcellular location is the plastid. The protein localises to the chloroplast thylakoid membrane. Functionally, seems to be required for the assembly of the photosystem I complex. In Calycanthus floridus var. glaucus (Eastern sweetshrub), this protein is Photosystem I assembly protein Ycf4.